The following is a 132-amino-acid chain: Minor structural pilin EpdB (132 aa).

Residues 1–4 (MSKG) constitute a propeptide that is removed on maturation. The short motif at 9–19 (EFIVLFLALLV) is the QXSXEXXXL element.

The N-terminus is probably cleaved by the prepilin peptidase EppA, which recognizes the class III signal sequence.

The protein resides in the secreted. It localises to the cell surface. The protein localises to the fimbrium. Its function is as follows. Minor component of the type IV-like pili. Essential for pili formation. In Methanococcus maripaludis (strain DSM 14266 / JCM 13030 / NBRC 101832 / S2 / LL), this protein is Minor structural pilin EpdB.